Here is a 258-residue protein sequence, read N- to C-terminus: Ribosomal RNA small subunit methyltransferase J (258 aa).

Residues 111-112, 127-128, and D179 contribute to the S-adenosyl-L-methionine site; these read RD and ER.

It belongs to the methyltransferase superfamily. RsmJ family.

It localises to the cytoplasm. The enzyme catalyses guanosine(1516) in 16S rRNA + S-adenosyl-L-methionine = N(2)-methylguanosine(1516) in 16S rRNA + S-adenosyl-L-homocysteine + H(+). Specifically methylates the guanosine in position 1516 of 16S rRNA. In Alteromonas mediterranea (strain DSM 17117 / CIP 110805 / LMG 28347 / Deep ecotype), this protein is Ribosomal RNA small subunit methyltransferase J.